The primary structure comprises 499 residues: Protein SENSITIVE TO PROTON RHIZOTOXICITY 1 (499 aa).

Positions 1–31 are disordered; it reads METEDDLCNTNWGSSSSKSREPGSSDCGNST. A C2H2-type 1 zinc finger spans residues 244-266; the sequence is HFCTICGKGFKRDANLRMHMRGH. Residues 354 to 385 form a C2H2-type 2; atypical zinc finger; the sequence is KHCGKNKWLCSCGTTFSRKDKLFGHIALFQGH. Positions 390-436 are disordered; that stretch reads PLEETKPSASTSTQRGSSEGGNNNQGMVGFNLGSASNANQETTQPGM. Polar residues-rich tracts occupy residues 396–415 and 422–435; these read PSASTSTQRGSSEGGNNNQG and GSASNANQETTQPG.

Expressed in roots (e.g. root tips and lateral roots), leaves, flowers (e.g. stigma, sepal, anther, and filament), stems, siliques and cotyledons.

It localises to the nucleus. Functionally, probable transcription factor. Together with STOP2, plays a critical role in tolerance to major stress factors in acid soils such as proton H(+) and aluminum ion Al(3+). Required for the expression of genes in response to acidic stress (e.g. ALMT1 and MATE), and Al-activated citrate exudation. In Arabidopsis thaliana (Mouse-ear cress), this protein is Protein SENSITIVE TO PROTON RHIZOTOXICITY 1.